A 329-amino-acid polypeptide reads, in one-letter code: Malate dehydrogenase (329 aa).

12 to 18 serves as a coordination point for NAD(+); sequence GAAGQIG. Substrate-binding residues include Arg95 and Arg101. Residues Asn108, Gln115, and 132–134 each bind NAD(+); that span reads VGN. Residues Asn134 and Arg165 each coordinate substrate. His190 functions as the Proton acceptor in the catalytic mechanism.

It belongs to the LDH/MDH superfamily. MDH type 2 family.

The catalysed reaction is (S)-malate + NAD(+) = oxaloacetate + NADH + H(+). Functionally, catalyzes the reversible oxidation of malate to oxaloacetate. The polypeptide is Malate dehydrogenase (Polynucleobacter necessarius subsp. necessarius (strain STIR1)).